A 611-amino-acid polypeptide reads, in one-letter code: Lanthanide-dependent methanol dehydrogenase (611 aa).

Positions 1-34 are cleaved as a signal peptide; the sequence is MTVKLKKPKKYAVAKNATLLAAFGLIGSLSLAKA. A disulfide bridge links Cys138 with Cys139. The pyrroloquinoline quinone site is built by Arg144, Thr188, Ser203, Gly204, and Gly205. Glu206 provides a ligand contact to Ce(3+). Residue Glu206 participates in Eu(3+) binding. Positions 270 and 272 each coordinate pyrroloquinoline quinone. Residues Asn290, Asp333, and Asp335 each contribute to the Ce(3+) site. Eu(3+) contacts are provided by Asn290, Asp333, and Asp335. A pyrroloquinoline quinone-binding site is contributed by Arg360. Cys414 and Cys443 are joined by a disulfide. The pyrroloquinoline quinone site is built by Trp501 and Trp566.

This sequence belongs to the bacterial PQQ dehydrogenase family. Homodimer. The cofactor is Ce(3+). La(3+) is required as a cofactor. Requires Nd(3+) as cofactor. It depends on Pr(3+) as a cofactor. Eu(3+) serves as cofactor. The cofactor is pyrroloquinoline quinone.

The protein localises to the periplasm. It carries out the reaction 2 Fe(III)-[cytochrome cL] + methanol = 2 Fe(II)-[cytochrome cL] + formaldehyde + 2 H(+). It catalyses the reaction 4 Fe(III)-[cytochrome cL] + methanol + H2O = 4 Fe(II)-[cytochrome cL] + formate + 5 H(+). The enzyme catalyses 2 Fe(III)-[cytochrome cL] + a primary alcohol = 2 Fe(II)-[cytochrome cL] + an aldehyde + 2 H(+). It participates in one-carbon metabolism; methanol degradation. In terms of biological role, catalyzes the oxidation of methanol to formaldehyde or formate in the presence of lanthanides (Ln). Is a key enzyme in methane/methanol metabolism, allowing M.fumariolicum to grow on methane as the sole carbon and energy source. Can also act on other primary alcohols in vitro, such as ethanol, 1-propanol, 1-butanol, and 1-hexanol, but is not able to oxidize secondary alcohols and acetaldehyde. Uses a specific cytochrome cL, encoded by the adjacent gene in the locus, as electron acceptor. This Methylacidiphilum fumariolicum (strain SolV) protein is Lanthanide-dependent methanol dehydrogenase.